Here is a 124-residue protein sequence, read N- to C-terminus: Small ribosomal subunit protein uS13 (124 aa).

Residues 91 to 124 (HRKGLPVNGQNTRNNARTRKGKPKAVTGKKQAGK) are disordered.

The protein belongs to the universal ribosomal protein uS13 family. Part of the 30S ribosomal subunit. Forms a loose heterodimer with protein S19. Forms two bridges to the 50S subunit in the 70S ribosome.

In terms of biological role, located at the top of the head of the 30S subunit, it contacts several helices of the 16S rRNA. In the 70S ribosome it contacts the 23S rRNA (bridge B1a) and protein L5 of the 50S subunit (bridge B1b), connecting the 2 subunits; these bridges are implicated in subunit movement. Contacts the tRNAs in the A and P-sites. The chain is Small ribosomal subunit protein uS13 from Acholeplasma laidlawii (strain PG-8A).